A 335-amino-acid polypeptide reads, in one-letter code: Zinc finger protein 396 (335 aa).

The SCAN box domain maps to 52–134 (RQQFRQFGYQ…TMLEDVEREL (83 aa)). C2H2-type zinc fingers lie at residues 251–273 (QKCD…QRIH), 279–301 (YACD…RRTH), and 307–329 (YKCH…RKRH).

It belongs to the krueppel C2H2-type zinc-finger protein family. As to quaternary structure, isoforms 1 and 2 can both homo- and hetero-associate. As to expression, expressed strongly in liver, moderately in skeletal muscle and weakly in kidney, pancreas, spleen and prostate.

Its subcellular location is the nucleus. The protein localises to the cytoplasm. In terms of biological role, isoform 1 and isoform 2 act as DNA-dependent transcriptional repressors. In Homo sapiens (Human), this protein is Zinc finger protein 396 (ZNF396).